A 166-amino-acid polypeptide reads, in one-letter code: Interferon gamma (166 aa).

An N-terminal signal peptide occupies residues 1–23 (MKYTSYILAFQLCVVLGSLGCYC). At Gln-24 the chain carries Pyrrolidone carboxylic acid. N-linked (GlcNAc...) asparagine glycosylation is found at Asn-48, Asn-86, and Asn-120.

Belongs to the type II (or gamma) interferon family. As to quaternary structure, homodimer. Interacts with IFNGR1 (via extracellular domain); this interaction promotes IFNGR1 dimerization. In terms of tissue distribution, released primarily from activated T lymphocytes.

Its subcellular location is the secreted. Functionally, type II interferon produced by immune cells such as T-cells and NK cells that plays crucial roles in antimicrobial, antiviral, and antitumor responses by activating effector immune cells and enhancing antigen presentation. Primarily signals through the JAK-STAT pathway after interaction with its receptor IFNGR1 to affect gene regulation. Upon IFNG binding, IFNGR1 intracellular domain opens out to allow association of downstream signaling components JAK2, JAK1 and STAT1, leading to STAT1 activation, nuclear translocation and transcription of IFNG-regulated genes. Many of the induced genes are transcription factors such as IRF1 that are able to further drive regulation of a next wave of transcription. Plays a role in class I antigen presentation pathway by inducing a replacement of catalytic proteasome subunits with immunoproteasome subunits. In turn, increases the quantity, quality, and repertoire of peptides for class I MHC loading. Increases the efficiency of peptide generation also by inducing the expression of activator PA28 that associates with the proteasome and alters its proteolytic cleavage preference. Up-regulates as well MHC II complexes on the cell surface by promoting expression of several key molecules such as cathepsins B/CTSB, H/CTSH, and L/CTSL. Participates in the regulation of hematopoietic stem cells during development and under homeostatic conditions by affecting their development, quiescence, and differentiation. The polypeptide is Interferon gamma (IFNG) (Callithrix jacchus (White-tufted-ear marmoset)).